A 643-amino-acid chain; its full sequence is 1-deoxy-D-xylulose-5-phosphate synthase (643 aa).

Thiamine diphosphate contacts are provided by residues H72 and 113–115 (GHA). Mg(2+) is bound at residue D144. Residues 145–146 (GA), N174, Y287, and E370 each bind thiamine diphosphate. N174 provides a ligand contact to Mg(2+).

This sequence belongs to the transketolase family. DXPS subfamily. In terms of assembly, homodimer. Mg(2+) serves as cofactor. The cofactor is thiamine diphosphate.

The catalysed reaction is D-glyceraldehyde 3-phosphate + pyruvate + H(+) = 1-deoxy-D-xylulose 5-phosphate + CO2. It participates in metabolic intermediate biosynthesis; 1-deoxy-D-xylulose 5-phosphate biosynthesis; 1-deoxy-D-xylulose 5-phosphate from D-glyceraldehyde 3-phosphate and pyruvate: step 1/1. Functionally, catalyzes the acyloin condensation reaction between C atoms 2 and 3 of pyruvate and glyceraldehyde 3-phosphate to yield 1-deoxy-D-xylulose-5-phosphate (DXP). In Prochlorococcus marinus (strain SARG / CCMP1375 / SS120), this protein is 1-deoxy-D-xylulose-5-phosphate synthase.